Reading from the N-terminus, the 371-residue chain is Homeobox protein Nkx-2.1 (371 aa).

A DNA-binding region (homeobox) is located at residues arginine 161–alanine 220. Disordered stretches follow at residues glutamine 219–alanine 294 and glycine 310–alanine 339. Residues serine 233 to glycine 243 show a composition bias toward gly residues. The segment covering cysteine 244 to glutamine 253 has biased composition (low complexity). Serine 254 is subject to Phosphoserine. Over residues alanine 272–alanine 294 the composition is skewed to low complexity.

This sequence belongs to the NK-2 homeobox family. Interacts with WWTR1. In terms of processing, phosphorylated on serine residues by STK3/MST2. In terms of tissue distribution, thyroid and lung.

It localises to the nucleus. Functionally, transcription factor that binds and activates the promoter of thyroid specific genes such as thyroglobulin, thyroperoxidase, and thyrotropin receptor. Crucial in the maintenance of the thyroid differentiation phenotype. May play a role in lung development and surfactant homeostasis. Forms a regulatory loop with GRHL2 that coordinates lung epithelial cell morphogenesis and differentiation. Activates the transcription of GNRHR and plays a role in enhancing the circadian oscillation of its gene expression. Represses the transcription of the circadian transcriptional repressor NR1D1. In Homo sapiens (Human), this protein is Homeobox protein Nkx-2.1.